The following is a 256-amino-acid chain: Dihydromonacolin L-[lovastatin nonaketide synthase] thioesterase (256 aa).

Active-site charge relay system residues include Ser-122, Asp-201, and His-229.

The protein belongs to the LovG family.

It catalyses the reaction dihydromonacolin L-[lovastatin nonaketide synthase] + H2O = holo-[lovastatin nonaketide synthase] + dihydromonacolin L carboxylate + H(+). It functions in the pathway polyketide biosynthesis; lovastatin biosynthesis. Its function is as follows. Esterase; part of the gene cluster that mediates the biosynthesis of lovastatin (also known as mevinolin, mevacor or monacolin K), a hypolipidemic inhibitor of (3S)-hydroxymethylglutaryl-coenzyme A (HMG-CoA) reductase (HMGR). The first step in the biosynthesis of lovastatin is the production of dihydromonacolin L acid by the lovastatin nonaketide synthase lovB and the trans-acting enoyl reductase lovC via condensation of one acetyl-CoA unit and 8 malonyl-CoA units. Dihydromonacolin L acid is released from lovB by the thioesterase lovG. Next, dihydromonacolin L acid is oxidized by the dihydromonacolin L monooxygenase lovA twice to form monacolin J acid. The 2-methylbutyrate moiety of lovastatin is synthesized by the lovastatin diketide synthase lovF via condensation of one acetyl-CoA unit and one malonyl-CoA unit. Finally, the covalent attachment of this moiety to monacolin J acid is catalyzed by the transesterase lovD to yield lovastatin. LovD has broad substrate specificity and can also convert monacolin J to simvastatin using alpha-dimethylbutanoyl-S-methyl-3-mercaptopropionate (DMB-S-MMP) as the thioester acyl donor, and can also catalyze the reverse reaction and function as hydrolase in vitro. LovD has much higher activity with LovF-bound 2-methylbutanoate than with free diketide substrates. In terms of biological role, esterase that catalyzes the release of covalently bound dihydromonacolin L from LovB during lovastatin biosynthesis. The polypeptide is Dihydromonacolin L-[lovastatin nonaketide synthase] thioesterase (Aspergillus terreus).